The primary structure comprises 712 residues: Rap1 GTPase-activating protein 2 (712 aa).

Positions 1–33 are disordered; it reads MLAGLKVKKQELANSSDVTLPDRPLSPPLTAPP. Ser-26 carries the phosphoserine modification. Thr-30 carries the phosphothreonine modification. The 217-residue stretch at 229–445 folds into the Rap-GAP domain; sequence IVSYDEHDVN…RTRAALLDNL (217 aa). Residues Ser-488, Ser-495, Ser-525, Ser-539, Ser-545, Ser-593, and Ser-594 each carry the phosphoserine modification. The interval 529–712 is disordered; the sequence is AAATAKNQSR…LSHASSSAGH (184 aa). The segment covering 566-594 has biased composition (polar residues); that stretch reads DSASSTPKTPDGGHSSQEIKSETSSNPSS. Residues 599–612 are compositionally biased toward basic and acidic residues; the sequence is PNKEKPFIKLKENG. A compositionally biased stretch (low complexity) spans 617–629; that stretch reads SRSSSSTSSFSST. The span at 641–652 shows a compositional bias: polar residues; it reads SGSSQPSTTSPF. Positions 660-669 are enriched in low complexity; the sequence is SPSPSSESPS. Residues 681 to 694 show a composition bias toward polar residues; that stretch reads RSPTDAKSRNSPRS.

It localises to the cytoplasm. Functionally, GTPase activator for the nuclear Ras-related regulatory protein RAP-1A (KREV-1), converting it to the putatively inactive GDP-bound state. The polypeptide is Rap1 GTPase-activating protein 2 (Rap1gap2) (Mus musculus (Mouse)).